Here is a 338-residue protein sequence, read N- to C-terminus: Tetraacyldisaccharide 4'-kinase (338 aa).

An ATP-binding site is contributed by 66-73 (IAGGAGKT).

It belongs to the LpxK family.

The enzyme catalyses a lipid A disaccharide + ATP = a lipid IVA + ADP + H(+). It functions in the pathway glycolipid biosynthesis; lipid IV(A) biosynthesis; lipid IV(A) from (3R)-3-hydroxytetradecanoyl-[acyl-carrier-protein] and UDP-N-acetyl-alpha-D-glucosamine: step 6/6. Transfers the gamma-phosphate of ATP to the 4'-position of a tetraacyldisaccharide 1-phosphate intermediate (termed DS-1-P) to form tetraacyldisaccharide 1,4'-bis-phosphate (lipid IVA). The protein is Tetraacyldisaccharide 4'-kinase of Delftia acidovorans (strain DSM 14801 / SPH-1).